Consider the following 159-residue polypeptide: Immunoglobulin J chain (159 aa).

Residues 1–22 (MKNHLLFWGVLAVFIKAVHVKA) form the signal peptide. Glutamine 23 is modified (pyrrolidone carboxylic acid). 3 disulfide bridges follow: cysteine 35–cysteine 123, cysteine 94–cysteine 114, and cysteine 131–cysteine 156. N-linked (GlcNAc...) (complex) asparagine glycosylation occurs at asparagine 71.

Part of the secretory IgA (sIgA) complex that consists of two, four or five IgA monomers, and two additional non-Ig polypeptides, namely the JCHAIN and the secretory component (the proteolytic product of PIGR). Part of the secretory IgM (sIgM) complex that consists of five IgM monomers, and two additional non-Ig polypeptides, namely the JCHAIN and the secretory component (the proteolytic product of PIGR). JCHAIN-containing IgM interacts (via CH4 domain) with FCRM (via Ig-like domain).

It is found in the secreted. Functionally, serves to link two monomer units of either IgM or IgA. In the case of IgM, the J chain-joined dimer is a nucleating unit for the IgM pentamer, and in the case of IgA it induces dimers and/or larger polymers. It also helps to bind these immunoglobulins to secretory component. The chain is Immunoglobulin J chain from Homo sapiens (Human).